The chain runs to 326 residues: ELAV-like protein 1-B (326 aa).

3 RRM domains span residues 20-98 (TNLI…FARP), 106-186 (ANLY…FAAN), and 244-322 (WCIF…FKTS).

The protein belongs to the RRM elav family. Interacts (via RRM3) with cirbp. Unable to form oligomers. Part of a ribonucleoprotein (RNP) complex, at least composed of elavl1/elrA and/or elavl2/elrB, igf2bp3/vg1RBP, ddx6/Xp54, ybx2/frgy2, lsm14b/rap55b and, in a subset of RNP complexes, stau1/staufen.

Its subcellular location is the cytoplasm. It localises to the cell cortex. RNA-binding protein that binds to the 3'-UTR region of mRNAs and increases their stability. Involved in embryonic stem cells (ESCs) differentiation: preferentially binds mRNAs that are not methylated by N6-methyladenosine (m6A), stabilizing them, promoting ESCs differentiation. Binds to poly-U elements and AU-rich elements (AREs) in the 3'-UTR of target mRNAs. Acts cooperatively with cribp to stabilize AU-rich sequence (ARE)-containing mRNAs. May play a role during gastrulation. Required for the vegetal localization of vg1 mRNA. This Xenopus laevis (African clawed frog) protein is ELAV-like protein 1-B (elavl1-b).